Reading from the N-terminus, the 683-residue chain is Methionine--tRNA ligase (683 aa).

The short motif at 15 to 25 (PYANGPIHLGH) is the 'HIGH' region element. 4 residues coordinate Zn(2+): Cys-146, Cys-149, Cys-159, and Cys-162. A 'KMSKS' region motif is present at residues 332–336 (KMSKS). Residue Lys-335 coordinates ATP. Residues 582–683 (DFAKIDLRIA…EGALPGMRVK (102 aa)) enclose the tRNA-binding domain.

The protein belongs to the class-I aminoacyl-tRNA synthetase family. MetG type 1 subfamily. In terms of assembly, homodimer. Zn(2+) is required as a cofactor.

The protein localises to the cytoplasm. It carries out the reaction tRNA(Met) + L-methionine + ATP = L-methionyl-tRNA(Met) + AMP + diphosphate. Is required not only for elongation of protein synthesis but also for the initiation of all mRNA translation through initiator tRNA(fMet) aminoacylation. The chain is Methionine--tRNA ligase from Shewanella frigidimarina (strain NCIMB 400).